The primary structure comprises 338 residues: Lipoate-protein ligase A (338 aa).

The region spanning 29–216 (PATQRVLFLW…AFFAHYGERV (188 aa)) is the BPL/LPL catalytic domain. Residues R71, 76 to 79 (GAVF), and K134 contribute to the ATP site. Residue K134 coordinates (R)-lipoate.

This sequence belongs to the LplA family. In terms of assembly, monomer.

The protein localises to the cytoplasm. It carries out the reaction L-lysyl-[lipoyl-carrier protein] + (R)-lipoate + ATP = N(6)-[(R)-lipoyl]-L-lysyl-[lipoyl-carrier protein] + AMP + diphosphate + H(+). It functions in the pathway protein modification; protein lipoylation via exogenous pathway; protein N(6)-(lipoyl)lysine from lipoate: step 1/2. Its pathway is protein modification; protein lipoylation via exogenous pathway; protein N(6)-(lipoyl)lysine from lipoate: step 2/2. Catalyzes both the ATP-dependent activation of exogenously supplied lipoate to lipoyl-AMP and the transfer of the activated lipoyl onto the lipoyl domains of lipoate-dependent enzymes. This is Lipoate-protein ligase A from Escherichia coli O1:K1 / APEC.